We begin with the raw amino-acid sequence, 270 residues long: MDNRIIYVVSDSVGETAELVVKASLSQFNGSADDTHIRRIPYVEDIGTINEVVSLAKADGGIICFTLVVPEMRKYLVEQAEKANVLYYDIIGPLIDKMESAYGLTAKYEPGRVRQLDEDYFKKVEAIEFAVKYDDGRDPRGILKADIILLGVSRTSKTPLSQYLAHKRLKVANVPIVPEVDPPEELFSVDPKKCIGLKISPDKLNHIRKERLKSLGLNDKAIYANINRIKEELEYFEKIVDRIGCQVVDVSNKAVEETANIIHHLKTKGR.

An ADP-binding site is contributed by 151 to 158 (GVSRTSKT).

Belongs to the pyruvate, phosphate/water dikinase regulatory protein family. PDRP subfamily.

It catalyses the reaction N(tele)-phospho-L-histidyl/L-threonyl-[pyruvate, phosphate dikinase] + ADP = N(tele)-phospho-L-histidyl/O-phospho-L-threonyl-[pyruvate, phosphate dikinase] + AMP + H(+). The catalysed reaction is N(tele)-phospho-L-histidyl/O-phospho-L-threonyl-[pyruvate, phosphate dikinase] + phosphate + H(+) = N(tele)-phospho-L-histidyl/L-threonyl-[pyruvate, phosphate dikinase] + diphosphate. Functionally, bifunctional serine/threonine kinase and phosphorylase involved in the regulation of the pyruvate, phosphate dikinase (PPDK) by catalyzing its phosphorylation/dephosphorylation. The sequence is that of Putative pyruvate, phosphate dikinase regulatory protein from Bacillus velezensis (strain DSM 23117 / BGSC 10A6 / LMG 26770 / FZB42) (Bacillus amyloliquefaciens subsp. plantarum).